Reading from the N-terminus, the 248-residue chain is tRNA (guanine-N(1)-)-methyltransferase (248 aa).

S-adenosyl-L-methionine contacts are provided by residues Gly113 and 133–138 (IGDYVL).

The protein belongs to the RNA methyltransferase TrmD family. As to quaternary structure, homodimer.

Its subcellular location is the cytoplasm. The enzyme catalyses guanosine(37) in tRNA + S-adenosyl-L-methionine = N(1)-methylguanosine(37) in tRNA + S-adenosyl-L-homocysteine + H(+). Its function is as follows. Specifically methylates guanosine-37 in various tRNAs. In Shewanella loihica (strain ATCC BAA-1088 / PV-4), this protein is tRNA (guanine-N(1)-)-methyltransferase.